The primary structure comprises 203 residues: Endo-type membrane-bound lytic murein transglycosylase A (203 aa).

An N-terminal signal peptide occupies residues 1–15; it reads MKLRWLLILVVFLAG. Cysteine 16 is lipidated: N-palmitoyl cysteine. Cysteine 16 is lipidated: S-diacylglycerol cysteine.

It belongs to the transglycosylase Slt family.

The protein resides in the cell outer membrane. The catalysed reaction is Endolytic cleavage of the (1-&gt;4)-beta-glycosidic linkage between N-acetylmuramic acid (MurNAc) and N-acetylglucosamine (GlcNAc) residues in peptidoglycan with concomitant formation of a 1,6-anhydrobond in the MurNAc residue.. Its function is as follows. Murein-degrading enzyme. May play a role in recycling of muropeptides during cell elongation and/or cell division. Preferentially cleaves at a distance of more than two disaccharide units from the ends of the glycan chain. This chain is Endo-type membrane-bound lytic murein transglycosylase A, found in Klebsiella pneumoniae (strain 342).